The chain runs to 257 residues: Imidazole glycerol phosphate synthase subunit HisF (257 aa).

Residues D11 and D130 contribute to the active site.

It belongs to the HisA/HisF family. Heterodimer of HisH and HisF.

It localises to the cytoplasm. The catalysed reaction is 5-[(5-phospho-1-deoxy-D-ribulos-1-ylimino)methylamino]-1-(5-phospho-beta-D-ribosyl)imidazole-4-carboxamide + L-glutamine = D-erythro-1-(imidazol-4-yl)glycerol 3-phosphate + 5-amino-1-(5-phospho-beta-D-ribosyl)imidazole-4-carboxamide + L-glutamate + H(+). It functions in the pathway amino-acid biosynthesis; L-histidine biosynthesis; L-histidine from 5-phospho-alpha-D-ribose 1-diphosphate: step 5/9. In terms of biological role, IGPS catalyzes the conversion of PRFAR and glutamine to IGP, AICAR and glutamate. The HisF subunit catalyzes the cyclization activity that produces IGP and AICAR from PRFAR using the ammonia provided by the HisH subunit. The protein is Imidazole glycerol phosphate synthase subunit HisF of Shewanella sp. (strain ANA-3).